The primary structure comprises 1724 residues: Protein CHROMATIN REMODELING 5 (1724 aa).

2 disordered regions span residues Q24–T88 and D104–E415. A compositionally biased stretch (polar residues) spans N25 to L34. Residues E126–S144 show a composition bias toward basic and acidic residues. Positions R138 to S164 form a coiled coil. Acidic residues-rich tracts occupy residues E145 to N157, P170 to N186, A239 to D264, and V278 to D297. Basic residues predominate over residues K301–R313. The Nuclear localization signal 1 motif lies at E320 to S327. The segment covering Q337–D350 has biased composition (acidic residues). Over residues T362–Q376 the composition is skewed to polar residues. The span at D403–D412 shows a compositional bias: basic and acidic residues. The Chromo 1 domain maps to D420–K499. A coiled-coil region spans residues R505–D525. Positions S533 to K597 constitute a Chromo 2 domain. The region spanning V637–G809 is the Helicase ATP-binding domain. Residue D650 to T657 coordinates ATP. A DEAH box motif is present at residues D760–H763. Residues I943–E1094 form the Helicase C-terminal domain. Residues K1126 to H1163 are a coiled coil. A disordered region spans residues A1199–Y1245. 2 consecutive short sequence motifs (nuclear localization signal) follow at residues K1224–P1231 and L1348–Q1355. The segment covering G1227–S1237 has biased composition (basic and acidic residues). Disordered regions lie at residues Q1480–D1524 and K1654–R1724. Residues D1504–G1520 show a composition bias toward basic and acidic residues. Polar residues predominate over residues A1658 to V1667. A compositionally biased stretch (basic and acidic residues) spans K1669–T1691. Residues E1692–L1702 are compositionally biased toward polar residues.

It belongs to the SNF2/RAD54 helicase family.

It localises to the nucleus. Functionally, DNA-binding helicase that specifically binds to the promoter of target genes, leading to chromatin remodeling, possibly by promoting deposition of histone H3.3. Probable chromatin remodeling factor. This chain is Protein CHROMATIN REMODELING 5, found in Arabidopsis thaliana (Mouse-ear cress).